An 88-amino-acid polypeptide reads, in one-letter code: Small ribosomal subunit protein uS15 (88 aa).

It belongs to the universal ribosomal protein uS15 family. In terms of assembly, part of the 30S ribosomal subunit. Forms a bridge to the 50S subunit in the 70S ribosome, contacting the 23S rRNA.

Functionally, one of the primary rRNA binding proteins, it binds directly to 16S rRNA where it helps nucleate assembly of the platform of the 30S subunit by binding and bridging several RNA helices of the 16S rRNA. Forms an intersubunit bridge (bridge B4) with the 23S rRNA of the 50S subunit in the ribosome. The sequence is that of Small ribosomal subunit protein uS15 from Paracidovorax citrulli (strain AAC00-1) (Acidovorax citrulli).